Here is a 291-residue protein sequence, read N- to C-terminus: 3-methylcatechol 2,3-dioxygenase (291 aa).

VOC domains follow at residues 5 to 119 (RLGY…IYYG) and 143 to 264 (GLGH…YGWG). His146, His210, and Glu260 together coordinate Fe cation.

Belongs to the extradiol ring-cleavage dioxygenase family. As to quaternary structure, homooctamer. Fe(2+) is required as a cofactor.

It carries out the reaction 3-methylcatechol + O2 = 2-hydroxy-6-oxo-2,4-heptadienoate + H(+). It participates in xenobiotic degradation; toluene degradation. In Pseudomonas putida (strain ATCC 700007 / DSM 6899 / JCM 31910 / BCRC 17059 / LMG 24140 / F1), this protein is 3-methylcatechol 2,3-dioxygenase (todE).